Consider the following 662-residue polypeptide: Transmembrane 9 superfamily member 2 (662 aa).

Residues 1–28 (MSSRPPASPPAQGSRLLLLSLLLLGTVP) form the signal peptide. Over 29-299 (GPRPGSAFYL…LESMPHTHIQ (271 aa)) the chain is Lumenal. Residues 300-320 (WFSIMNSLVIVLFLSGMVAMI) form a helical membrane-spanning segment. The Cytoplasmic portion of the chain corresponds to 321 to 373 (MLRTLHKDIARYNQMDSTEDAQEEFGWKLVHGDIFRPPRKGMLLSVFLGSGTQ). A helical membrane pass occupies residues 374-394 (ILIMTFVTLFFACLGFLSPAN). Over 395–397 (RGA) the chain is Lumenal. The helical transmembrane segment at 398-418 (LMTCAVVLWVLLGTPAGYVAA) threads the bilayer. Residues 419–436 (RFYKSFGGEKWKTNVLLT) are Cytoplasmic-facing. The chain crosses the membrane as a helical span at residues 437 to 457 (SFLCPGIVFADFFIMNLILWG). At 458-465 (EGSSAAIP) the chain is on the lumenal side. Residues 466-486 (FGTLVAILALWFCISVPLTFI) traverse the membrane as a helical segment. Residues 487 to 521 (GAYFGFKKNAIEHPVRTNQIPRQIPEQSFYTKPLP) lie on the Cytoplasmic side of the membrane. Residues 522-542 (GIIMGGILPFGCIFIQLFFIL) form a helical membrane-spanning segment. Topologically, residues 543–553 (NSIWSHQMYYM) are lumenal. A helical transmembrane segment spans residues 554 to 574 (FGFLFLVFIILVITCSEATIL). The Cytoplasmic portion of the chain corresponds to 575 to 590 (LCYFHLCAEDYHWQWR). A helical membrane pass occupies residues 591–611 (SFLTSGFTAVYFLIYAIHYFF). Topologically, residues 612–630 (SKLQITGTASTILYFGYTM) are lumenal. The chain crosses the membrane as a helical span at residues 631-651 (IMVLIFFLFTGTIGFFACFWF). Topologically, residues 652–662 (VTKIYSVVKVD) are cytoplasmic.

Belongs to the nonaspanin (TM9SF) (TC 9.A.2) family.

The protein localises to the endosome membrane. It is found in the golgi outpost. Its subcellular location is the cytoplasm. The protein resides in the cytoskeleton. It localises to the microtubule organizing center. Its function is as follows. In the intracellular compartments, may function as a channel or small molecule transporter. In Mus musculus (Mouse), this protein is Transmembrane 9 superfamily member 2 (Tm9sf2).